We begin with the raw amino-acid sequence, 129 residues long: Small ribosomal subunit protein uS9 (129 aa).

This sequence belongs to the universal ribosomal protein uS9 family.

In Gemmatimonas aurantiaca (strain DSM 14586 / JCM 11422 / NBRC 100505 / T-27), this protein is Small ribosomal subunit protein uS9.